A 149-amino-acid polypeptide reads, in one-letter code: Evolved beta-galactosidase subunit beta (149 aa).

As to quaternary structure, heterooctamer of 4 alpha and 4 beta subunits.

Its function is as follows. Required for full activity of the EbgA enzyme. Exact function not known. The protein is Evolved beta-galactosidase subunit beta (ebgC) of Escherichia coli O6:H1 (strain CFT073 / ATCC 700928 / UPEC).